A 135-amino-acid polypeptide reads, in one-letter code: Small ribosomal subunit protein bS6 (135 aa).

The segment at 98–135 (EASPMAKAKDERDARRAAISERSSEADEVEENAEESAE) is disordered. Residues 104-122 (KAKDERDARRAAISERSSE) show a composition bias toward basic and acidic residues. Acidic residues predominate over residues 123 to 135 (ADEVEENAEESAE).

The protein belongs to the bacterial ribosomal protein bS6 family.

Binds together with bS18 to 16S ribosomal RNA. The protein is Small ribosomal subunit protein bS6 of Shewanella amazonensis (strain ATCC BAA-1098 / SB2B).